Consider the following 331-residue polypeptide: GTP 3',8-cyclase 2 (331 aa).

In terms of domain architecture, Radical SAM core spans 9-234 (PFGRRITYLR…PSLARSGGPS (226 aa)). Residue R18 participates in GTP binding. [4Fe-4S] cluster contacts are provided by C25 and C29. Residue Y31 participates in S-adenosyl-L-methionine binding. C32 is a [4Fe-4S] cluster binding site. R67 lines the GTP pocket. G71 provides a ligand contact to S-adenosyl-L-methionine. T98 lines the GTP pocket. S122 is an S-adenosyl-L-methionine binding site. Position 159 (K159) interacts with GTP. Residue M193 participates in S-adenosyl-L-methionine binding. Positions 257 and 260 each coordinate [4Fe-4S] cluster. 262 to 264 (RVR) provides a ligand contact to GTP. C274 contacts [4Fe-4S] cluster.

Belongs to the radical SAM superfamily. MoaA family. In terms of assembly, monomer and homodimer. Requires [4Fe-4S] cluster as cofactor.

It carries out the reaction GTP + AH2 + S-adenosyl-L-methionine = (8S)-3',8-cyclo-7,8-dihydroguanosine 5'-triphosphate + 5'-deoxyadenosine + L-methionine + A + H(+). It participates in cofactor biosynthesis; molybdopterin biosynthesis. Functionally, catalyzes the cyclization of GTP to (8S)-3',8-cyclo-7,8-dihydroguanosine 5'-triphosphate. This Pseudomonas aeruginosa (strain ATCC 15692 / DSM 22644 / CIP 104116 / JCM 14847 / LMG 12228 / 1C / PRS 101 / PAO1) protein is GTP 3',8-cyclase 2 (moaA2).